A 303-amino-acid polypeptide reads, in one-letter code: Putative S-adenosyl-L-methionine-dependent methyltransferase MSMEG_1479/MSMEI_1443 (303 aa).

S-adenosyl-L-methionine-binding positions include Asp130 and 159-160 (DL).

It belongs to the UPF0677 family.

Functionally, exhibits S-adenosyl-L-methionine-dependent methyltransferase activity. The protein is Putative S-adenosyl-L-methionine-dependent methyltransferase MSMEG_1479/MSMEI_1443 of Mycolicibacterium smegmatis (strain ATCC 700084 / mc(2)155) (Mycobacterium smegmatis).